Reading from the N-terminus, the 436-residue chain is 3-ketoacyl-CoA thiolase (436 aa).

Cys99 acts as the Acyl-thioester intermediate in catalysis. Catalysis depends on proton acceptor residues His392 and Cys422.

Belongs to the thiolase-like superfamily. Thiolase family. In terms of assembly, heterotetramer of two alpha chains (FadJ) and two beta chains (FadI).

Its subcellular location is the cytoplasm. It catalyses the reaction an acyl-CoA + acetyl-CoA = a 3-oxoacyl-CoA + CoA. Its pathway is lipid metabolism; fatty acid beta-oxidation. In terms of biological role, catalyzes the final step of fatty acid oxidation in which acetyl-CoA is released and the CoA ester of a fatty acid two carbons shorter is formed. The sequence is that of 3-ketoacyl-CoA thiolase from Pseudoalteromonas translucida (strain TAC 125).